A 385-amino-acid chain; its full sequence is Glycerol-3-phosphate dehydrogenase [NAD(+)] 1 (385 aa).

Residues 29 to 34 (GSGNWG), Phe-121, Lys-144, and Ala-177 each bind NAD(+). Lys-144 serves as a coordination point for substrate. Lys-232 functions as the Proton acceptor in the catalytic mechanism. NAD(+)-binding residues include Arg-296 and Gln-325. Residue 296 to 297 (RN) coordinates substrate. Residue Ser-376 is modified to Phosphoserine. Thr-382 carries the phosphothreonine modification.

Belongs to the NAD-dependent glycerol-3-phosphate dehydrogenase family.

It is found in the cytoplasm. The catalysed reaction is sn-glycerol 3-phosphate + NAD(+) = dihydroxyacetone phosphate + NADH + H(+). The protein is Glycerol-3-phosphate dehydrogenase [NAD(+)] 1 (gpd1) of Schizosaccharomyces pombe (strain 972 / ATCC 24843) (Fission yeast).